A 173-amino-acid chain; its full sequence is Crossover junction endodeoxyribonuclease RuvC (173 aa).

Residues Asp8, Glu67, and Asp139 contribute to the active site. Asp8, Glu67, and Asp139 together coordinate Mg(2+).

This sequence belongs to the RuvC family. Homodimer which binds Holliday junction (HJ) DNA. The HJ becomes 2-fold symmetrical on binding to RuvC with unstacked arms; it has a different conformation from HJ DNA in complex with RuvA. In the full resolvosome a probable DNA-RuvA(4)-RuvB(12)-RuvC(2) complex forms which resolves the HJ. The cofactor is Mg(2+).

It is found in the cytoplasm. The enzyme catalyses Endonucleolytic cleavage at a junction such as a reciprocal single-stranded crossover between two homologous DNA duplexes (Holliday junction).. Functionally, the RuvA-RuvB-RuvC complex processes Holliday junction (HJ) DNA during genetic recombination and DNA repair. Endonuclease that resolves HJ intermediates. Cleaves cruciform DNA by making single-stranded nicks across the HJ at symmetrical positions within the homologous arms, yielding a 5'-phosphate and a 3'-hydroxyl group; requires a central core of homology in the junction. The consensus cleavage sequence is 5'-(A/T)TT(C/G)-3'. Cleavage occurs on the 3'-side of the TT dinucleotide at the point of strand exchange. HJ branch migration catalyzed by RuvA-RuvB allows RuvC to scan DNA until it finds its consensus sequence, where it cleaves and resolves the cruciform DNA. The protein is Crossover junction endodeoxyribonuclease RuvC of Klebsiella pneumoniae (strain 342).